A 218-amino-acid chain; its full sequence is Adenylate kinase (218 aa).

Residue 10–15 (GAGKGT) coordinates ATP. Residues 30–59 (STGDMIRETIKSGSALGQELKKVLDAGELV) form an NMP region. AMP is bound by residues T31, R36, 57–59 (ELV), and Q92. Residues 122–159 (GRRIHPASGRTYHTKFNPPKVADKDDVTGEPLITRTDD) form an LID region. Residues R123 and 132–133 (TY) each bind ATP. AMP is bound by residues R156 and R167. Position 202 (Q202) interacts with ATP.

Belongs to the adenylate kinase family. Monomer.

It is found in the cytoplasm. It catalyses the reaction AMP + ATP = 2 ADP. It functions in the pathway purine metabolism; AMP biosynthesis via salvage pathway; AMP from ADP: step 1/1. Catalyzes the reversible transfer of the terminal phosphate group between ATP and AMP. Plays an important role in cellular energy homeostasis and in adenine nucleotide metabolism. The protein is Adenylate kinase of Francisella tularensis subsp. tularensis (strain FSC 198).